A 38-amino-acid chain; its full sequence is Large ribosomal subunit protein bL36 (38 aa).

It belongs to the bacterial ribosomal protein bL36 family.

This chain is Large ribosomal subunit protein bL36, found in Chlorobium limicola (strain DSM 245 / NBRC 103803 / 6330).